A 306-amino-acid polypeptide reads, in one-letter code: MLNEFINFETISRSDWQRFYQEDQVSLTPEELESIRSLNDKIDVQEVRDIYLPLINLIRIYHRAAEDLTFSKGIFLQKAQANRPFIIGISGSVAVGKSTTSRLLQLLLQRTFPKAKVDMVTTDGFLFPNQVLIDKGILNRKGFPESYDMPLLLNFLDTVKNGGDVNIPVYSHEIYDIVPGLTQKISQPNFLIVEGINVFQNPINQRLYMSDYFDFSIYIDADVKNIKTWYLERFQTLLELARKDENNYYHRFTKLTKEEALSLAQKTWKEINLVNLENYIEPTRNRAELILHKGDSHKIDLIHLKK.

91–98 (GSVAVGKS) contributes to the ATP binding site.

Belongs to the prokaryotic pantothenate kinase family.

Its subcellular location is the cytoplasm. It catalyses the reaction (R)-pantothenate + ATP = (R)-4'-phosphopantothenate + ADP + H(+). The protein operates within cofactor biosynthesis; coenzyme A biosynthesis; CoA from (R)-pantothenate: step 1/5. The sequence is that of Pantothenate kinase from Streptococcus thermophilus (strain ATCC BAA-491 / LMD-9).